Here is a 308-residue protein sequence, read N- to C-terminus: UDP-3-O-acyl-N-acetylglucosamine deacetylase (308 aa).

Zn(2+)-binding residues include histidine 78, histidine 235, and aspartate 239. Histidine 262 serves as the catalytic Proton donor.

The protein belongs to the LpxC family. Zn(2+) is required as a cofactor.

It carries out the reaction a UDP-3-O-[(3R)-3-hydroxyacyl]-N-acetyl-alpha-D-glucosamine + H2O = a UDP-3-O-[(3R)-3-hydroxyacyl]-alpha-D-glucosamine + acetate. The protein operates within glycolipid biosynthesis; lipid IV(A) biosynthesis; lipid IV(A) from (3R)-3-hydroxytetradecanoyl-[acyl-carrier-protein] and UDP-N-acetyl-alpha-D-glucosamine: step 2/6. Catalyzes the hydrolysis of UDP-3-O-myristoyl-N-acetylglucosamine to form UDP-3-O-myristoylglucosamine and acetate, the committed step in lipid A biosynthesis. In Anaeromyxobacter dehalogenans (strain 2CP-C), this protein is UDP-3-O-acyl-N-acetylglucosamine deacetylase.